The sequence spans 466 residues: 23S rRNA (uracil(1939)-C(5))-methyltransferase RlmD (466 aa).

Residues methionine 1–glutamate 54 form the TRAM domain. Residues cysteine 67, cysteine 73, cysteine 76, and cysteine 155 each coordinate [4Fe-4S] cluster. The S-adenosyl-L-methionine site is built by glutamine 264, phenylalanine 293, asparagine 298, glutamate 314, asparagine 342, and aspartate 363. Cysteine 393 functions as the Nucleophile in the catalytic mechanism.

It belongs to the class I-like SAM-binding methyltransferase superfamily. RNA M5U methyltransferase family. RlmD subfamily.

It catalyses the reaction uridine(1939) in 23S rRNA + S-adenosyl-L-methionine = 5-methyluridine(1939) in 23S rRNA + S-adenosyl-L-homocysteine + H(+). In terms of biological role, catalyzes the formation of 5-methyl-uridine at position 1939 (m5U1939) in 23S rRNA. The chain is 23S rRNA (uracil(1939)-C(5))-methyltransferase RlmD from Bordetella bronchiseptica (strain ATCC BAA-588 / NCTC 13252 / RB50) (Alcaligenes bronchisepticus).